The following is a 141-amino-acid chain: Lysozyme P (141 aa).

An N-terminal signal peptide occupies residues 1–18 (MKAFLVICALTLTAVATQ). The C-type lysozyme domain occupies 20-141 (RTMDRCSLAR…GSLPSINSCF (122 aa)). 4 disulfide bridges follow: Cys25-Cys140, Cys46-Cys130, Cys81-Cys97, and Cys93-Cys111. Residues Glu51 and Asp69 contribute to the active site.

Belongs to the glycosyl hydrolase 22 family. Salivary gland.

It carries out the reaction Hydrolysis of (1-&gt;4)-beta-linkages between N-acetylmuramic acid and N-acetyl-D-glucosamine residues in a peptidoglycan and between N-acetyl-D-glucosamine residues in chitodextrins.. In terms of biological role, unlikely to play an active role in the humoral immune defense. May have a function in the digestion of bacteria in the food. The chain is Lysozyme P (LysP) from Drosophila melanogaster (Fruit fly).